We begin with the raw amino-acid sequence, 462 residues long: Phosphoglucosamine mutase (462 aa).

Catalysis depends on S112, which acts as the Phosphoserine intermediate. The Mg(2+) site is built by S112, D250, D252, and D254. At S112 the chain carries Phosphoserine.

It belongs to the phosphohexose mutase family. Mg(2+) is required as a cofactor. In terms of processing, activated by phosphorylation.

The enzyme catalyses alpha-D-glucosamine 1-phosphate = D-glucosamine 6-phosphate. In terms of biological role, catalyzes the conversion of glucosamine-6-phosphate to glucosamine-1-phosphate. This Parasynechococcus marenigrum (strain WH8102) protein is Phosphoglucosamine mutase.